Consider the following 375-residue polypeptide: Tyrosine--tRNA ligase (375 aa).

Residues Tyr37, Tyr168, Gln172, Asp175, and Gln190 each coordinate L-tyrosine. Positions Lys251–Ser255 match the 'KMSKS' region motif. Lys254 lines the ATP pocket.

Belongs to the class-I aminoacyl-tRNA synthetase family. TyrS type 4 subfamily. In terms of assembly, homodimer.

Its subcellular location is the cytoplasm. The enzyme catalyses tRNA(Tyr) + L-tyrosine + ATP = L-tyrosyl-tRNA(Tyr) + AMP + diphosphate + H(+). Functionally, catalyzes the attachment of tyrosine to tRNA(Tyr) in a two-step reaction: tyrosine is first activated by ATP to form Tyr-AMP and then transferred to the acceptor end of tRNA(Tyr). The sequence is that of Tyrosine--tRNA ligase from Pyrococcus furiosus (strain ATCC 43587 / DSM 3638 / JCM 8422 / Vc1).